The following is a 306-amino-acid chain: Non-specific ribonucleoside hydrolase RihC (306 aa).

Residue H235 is part of the active site.

Belongs to the IUNH family. RihC subfamily.

In terms of biological role, hydrolyzes both purine and pyrimidine ribonucleosides with a broad-substrate specificity. This is Non-specific ribonucleoside hydrolase RihC from Salmonella dublin (strain CT_02021853).